We begin with the raw amino-acid sequence, 484 residues long: Replication factor C large subunit (484 aa).

46-53 (GPPGSGKT) serves as a coordination point for ATP. Basic and acidic residues-rich tracts occupy residues 419–432 (VKTE…KTKE), 442–451 (RISEPPEPLK), and 459–478 (KSVE…KKQA). The interval 419-484 (VKTETPKKKE…KKQATLDSFF (66 aa)) is disordered.

The protein belongs to the activator 1 small subunits family. RfcL subfamily. Heteromultimer composed of small subunits (RfcS) and large subunits (RfcL).

Functionally, part of the RFC clamp loader complex which loads the PCNA sliding clamp onto DNA. The sequence is that of Replication factor C large subunit from Methanococcus maripaludis (strain C5 / ATCC BAA-1333).